Here is a 50-residue protein sequence, read N- to C-terminus: Large ribosomal subunit protein bL33B (50 aa).

Belongs to the bacterial ribosomal protein bL33 family.

This Mesomycoplasma hyopneumoniae (strain 7448) (Mycoplasma hyopneumoniae) protein is Large ribosomal subunit protein bL33B.